The sequence spans 599 residues: Aspartate--tRNA(Asp/Asn) ligase (599 aa).

An L-aspartate-binding site is contributed by glutamate 172. Residues 196 to 199 (QLFK) are aspartate. An L-aspartate-binding site is contributed by arginine 218. ATP is bound by residues 218–220 (RDE) and glutamine 227. Histidine 451 is an L-aspartate binding site. Glutamate 485 contributes to the ATP binding site. An L-aspartate-binding site is contributed by arginine 492. 537–540 (GLDR) is a binding site for ATP.

The protein belongs to the class-II aminoacyl-tRNA synthetase family. Type 1 subfamily. In terms of assembly, homodimer.

The protein resides in the cytoplasm. The enzyme catalyses tRNA(Asx) + L-aspartate + ATP = L-aspartyl-tRNA(Asx) + AMP + diphosphate. Its function is as follows. Aspartyl-tRNA synthetase with relaxed tRNA specificity since it is able to aspartylate not only its cognate tRNA(Asp) but also tRNA(Asn). Reaction proceeds in two steps: L-aspartate is first activated by ATP to form Asp-AMP and then transferred to the acceptor end of tRNA(Asp/Asn). The protein is Aspartate--tRNA(Asp/Asn) ligase of Dechloromonas aromatica (strain RCB).